A 1234-amino-acid polypeptide reads, in one-letter code: DNA-directed RNA polymerase subunit beta (1234 aa).

The protein belongs to the RNA polymerase beta chain family. In terms of assembly, the RNAP catalytic core consists of 2 alpha, 1 beta, 1 beta' and 1 omega subunit. When a sigma factor is associated with the core the holoenzyme is formed, which can initiate transcription.

It carries out the reaction RNA(n) + a ribonucleoside 5'-triphosphate = RNA(n+1) + diphosphate. Functionally, DNA-dependent RNA polymerase catalyzes the transcription of DNA into RNA using the four ribonucleoside triphosphates as substrates. In Clostridium perfringens (strain ATCC 13124 / DSM 756 / JCM 1290 / NCIMB 6125 / NCTC 8237 / Type A), this protein is DNA-directed RNA polymerase subunit beta.